The chain runs to 757 residues: Glutathione biosynthesis bifunctional protein GshAB (757 aa).

Residues 1 to 337 (MNIQQIVKEK…LGRARLGEVA (337 aa)) are glutamate--cysteine ligase. Residues 494 to 757 (KKVLAKAGFN…VLGMLFPELV (264 aa)) enclose the ATP-grasp domain. Residue 521–580 (PLFEGKAVVIKPKSTNFGLGISIFQQGVHDKADFAKAVEIAFREDKEVMVEDYLVGTEYR) participates in ATP binding. The Mg(2+) site is built by Asp702, Glu723, and Asn725. Residues Asp702, Glu723, and Asn725 each contribute to the Mn(2+) site.

It in the N-terminal section; belongs to the glutamate--cysteine ligase type 1 family. Type 2 subfamily. In terms of assembly, monomer. The cofactor is Mg(2+). Mn(2+) is required as a cofactor.

The catalysed reaction is L-cysteine + L-glutamate + ATP = gamma-L-glutamyl-L-cysteine + ADP + phosphate + H(+). The enzyme catalyses gamma-L-glutamyl-L-cysteine + glycine + ATP = glutathione + ADP + phosphate + H(+). It functions in the pathway sulfur metabolism; glutathione biosynthesis; glutathione from L-cysteine and L-glutamate: step 1/2. It participates in sulfur metabolism; glutathione biosynthesis; glutathione from L-cysteine and L-glutamate: step 2/2. In terms of biological role, synthesizes glutathione from L-glutamate and L-cysteine via gamma-L-glutamyl-L-cysteine. This Mannheimia succiniciproducens (strain KCTC 0769BP / MBEL55E) protein is Glutathione biosynthesis bifunctional protein GshAB.